Consider the following 348-residue polypeptide: D-erythrose-4-phosphate dehydrogenase (348 aa).

NAD(+)-binding positions include 12–13 and Arg-81; that span reads RI. Substrate contacts are provided by residues 154-156, Arg-200, 213-214, and Arg-236; these read SCT and TK. Cys-155 acts as the Nucleophile in catalysis. An NAD(+)-binding site is contributed by Asn-318.

The protein belongs to the glyceraldehyde-3-phosphate dehydrogenase family. Epd subfamily. In terms of assembly, homotetramer.

The protein resides in the cytoplasm. It catalyses the reaction D-erythrose 4-phosphate + NAD(+) + H2O = 4-phospho-D-erythronate + NADH + 2 H(+). Its pathway is cofactor biosynthesis; pyridoxine 5'-phosphate biosynthesis; pyridoxine 5'-phosphate from D-erythrose 4-phosphate: step 1/5. Catalyzes the NAD-dependent conversion of D-erythrose 4-phosphate to 4-phosphoerythronate. This is D-erythrose-4-phosphate dehydrogenase from Salmonella dublin (strain CT_02021853).